Reading from the N-terminus, the 463-residue chain is Female germline-specific tumor suppressor gld-1 (463 aa).

Residues 1–10 (MPSCTTPTYG) show a composition bias toward polar residues. A disordered region spans residues 1-76 (MPSCTTPTYG…RAPPPARLTL (76 aa)). Residues 11–31 (VSTQLESQSSESPSRSSVMTP) are compositionally biased toward low complexity. Positions 135-205 (PTATEPIEVE…PEPAGDMISI (71 aa)) are qua1 domain; involved in homodimerization. Residues 208–260 (KIYVPKNEYPDYNFVGRILGPRGMTAKQLEQDTGCKIMVRGKGSMRDKSKESA) enclose the KH domain. The tract at residues 305-336 (APEGTDELKRKQLMELAIINGTYRPMKSPNPA) is qua2 domain; involved in RNA binding. The interval 443–463 (NTNVSPSGASPSASSVNNTSF) is disordered. Low complexity predominate over residues 447–457 (SPSGASPSASS).

In terms of assembly, homodimer. Phosphorylated by cdk-2 which may negatively regulate its expression in distal mitotic germline cells. In terms of processing, undergoes proteasomal degradation in proximal oocytes following mating. In terms of tissue distribution, expressed in proximal and distal oocytes in female worms but is eliminated from proximal oocytes following mating.

RNA-binding protein which recognizes the 5'-UACUCAU-3' RNA consensus sequence. Binds sequences in both the 5'coding and the 3'-UTR region of rme-2 mRNA. Binds sequences in the 3'-UTR region of cye-1 mRNA. Binds to cyb-2.1, cyb-2.2 and cyb-3 mRNA. Binds sequences in the 3'-UTR region of tra-2 mRNA. Binds to the 3' UTR of Notch receptor homolog glp-1, thereby repressing glp-1 translation in the embryo. Binding to the glp-1 3' UTR is inhibited by pos-1 binding to an overlapping binding site in the glp-1 3' UTR. Germ line-specific tumor suppressor essential for oogenesis. Controls the spatial pattern of translation of multiple oogenesis specific mRNAs (e.g. yolk receptor rme-2) by repression of translation during early meiotic prophase (leptotene to pachytene) and then derepression of translation during diplotene/ diakinesis, following its degradation. Also functions to promote the male sexual fate in the hermaphrodite germline but not the male germline. Represses translation of the vacuolar ATPase component vha-13 in the distal gonad. Functions redundantly with gld-2 to promote the initiation of meiotic development and/or inhibit stem cell proliferation. By regulating cye-1 expression, prevents entry into mitosis in meiotic germline cells. In Caenorhabditis elegans, this protein is Female germline-specific tumor suppressor gld-1 (gld-1).